We begin with the raw amino-acid sequence, 251 residues long: Hydroxyacylglutathione hydrolase (251 aa).

Zn(2+) is bound by residues H59, H61, D63, H64, H118, D141, and H179.

It belongs to the metallo-beta-lactamase superfamily. Glyoxalase II family. As to quaternary structure, monomer. It depends on Zn(2+) as a cofactor.

It catalyses the reaction an S-(2-hydroxyacyl)glutathione + H2O = a 2-hydroxy carboxylate + glutathione + H(+). The protein operates within secondary metabolite metabolism; methylglyoxal degradation; (R)-lactate from methylglyoxal: step 2/2. In terms of biological role, thiolesterase that catalyzes the hydrolysis of S-D-lactoyl-glutathione to form glutathione and D-lactic acid. The sequence is that of Hydroxyacylglutathione hydrolase from Prochlorococcus marinus (strain NATL1A).